Here is a 464-residue protein sequence, read N- to C-terminus: Adenylyltransferase and sulfurtransferase MOCS3 (464 aa).

ATP is bound by residues Gly-101, Asp-122, 129–133 (NNMHR), Lys-146, and 190–191 (DN). Residues Cys-231 and Cys-234 each coordinate Zn(2+). The active-site Glycyl thioester intermediate; for adenylyltransferase activity is the Cys-248. The Zn(2+) site is built by Cys-306 and Cys-309. The region spanning 358–462 (KKEQHVLLDV…WAANVNPNFP (105 aa)) is the Rhodanese domain. The Cysteine persulfide intermediate; for sulfurtransferase activity role is filled by Cys-422.

This sequence in the N-terminal section; belongs to the HesA/MoeB/ThiF family. UBA4 subfamily. Zn(2+) serves as cofactor.

It localises to the cytoplasm. The enzyme catalyses [molybdopterin-synthase sulfur-carrier protein]-C-terminal Gly-Gly + ATP + H(+) = [molybdopterin-synthase sulfur-carrier protein]-C-terminal Gly-Gly-AMP + diphosphate. It carries out the reaction [molybdopterin-synthase sulfur-carrier protein]-C-terminal Gly-Gly-AMP + S-sulfanyl-L-cysteinyl-[cysteine desulfurase] + AH2 = [molybdopterin-synthase sulfur-carrier protein]-C-terminal-Gly-aminoethanethioate + L-cysteinyl-[cysteine desulfurase] + A + AMP + 2 H(+). The protein operates within tRNA modification; 5-methoxycarbonylmethyl-2-thiouridine-tRNA biosynthesis. It functions in the pathway cofactor biosynthesis; molybdopterin biosynthesis. Functionally, plays a central role in 2-thiolation of mcm(5)S(2)U at tRNA wobble positions of cytosolic tRNA(Lys), tRNA(Glu) and tRNA(Gln). Also essential during biosynthesis of the molybdenum cofactor. Acts by mediating the C-terminal thiocarboxylation of sulfur carriers URM1 and MOCS2A. Its N-terminus first activates URM1 and MOCS2A as acyl-adenylates (-COAMP), then the persulfide sulfur on the catalytic cysteine is transferred to URM1 and MOCS2A to form thiocarboxylation (-COSH) of their C-terminus. The reaction probably involves hydrogen sulfide that is generated from the persulfide intermediate and that acts as a nucleophile towards URM1 and MOCS2A. Subsequently, a transient disulfide bond is formed. Does not use thiosulfate as sulfur donor; NFS1 probably acting as a sulfur donor for thiocarboxylation reactions. The polypeptide is Adenylyltransferase and sulfurtransferase MOCS3 (Arabidopsis thaliana (Mouse-ear cress)).